The primary structure comprises 269 residues: 5'-nucleotidase SurE (269 aa).

4 residues coordinate a divalent metal cation: aspartate 11, aspartate 12, serine 43, and asparagine 101.

Belongs to the SurE nucleotidase family. A divalent metal cation serves as cofactor.

It localises to the cytoplasm. The catalysed reaction is a ribonucleoside 5'-phosphate + H2O = a ribonucleoside + phosphate. Functionally, nucleotidase that shows phosphatase activity on nucleoside 5'-monophosphates. In Synechococcus sp. (strain WH7803), this protein is 5'-nucleotidase SurE.